The sequence spans 169 residues: Methane monooxygenase component A gamma chain (169 aa).

In terms of assembly, m.trichosporium has two forms of methane monooxygenase, a soluble and a membrane-bound type. The soluble type consists of four components (A to D): protein A, comprising three chains, in an alpha-2, beta-2, gamma-2 configuration, is a nonheme iron protein containing an unusual mu-hydroxo bridge structure at its active site and interacts with both oxygen and methane.

The enzyme catalyses methane + NADH + O2 + H(+) = methanol + NAD(+) + H2O. The catalysed reaction is methane + NADPH + O2 + H(+) = methanol + NADP(+) + H2O. In terms of biological role, responsible for the initial oxygenation of methane to methanol in methanotrophs. It also catalyzes the monohydroxylation of a variety of unactivated alkenes, alicyclic, aromatic and heterocyclic compounds. The chain is Methane monooxygenase component A gamma chain (mmoZ) from Methylosinus trichosporium.